The sequence spans 360 residues: Phosphoserine aminotransferase (360 aa).

Residue R41 coordinates L-glutamate. Pyridoxal 5'-phosphate-binding positions include 75 to 76, W101, T152, D172, and Q195; that span reads GR. The residue at position 196 (K196) is an N6-(pyridoxal phosphate)lysine. 237-238 lines the pyridoxal 5'-phosphate pocket; the sequence is NT.

It belongs to the class-V pyridoxal-phosphate-dependent aminotransferase family. SerC subfamily. Homodimer. Pyridoxal 5'-phosphate is required as a cofactor.

Its subcellular location is the cytoplasm. It carries out the reaction O-phospho-L-serine + 2-oxoglutarate = 3-phosphooxypyruvate + L-glutamate. The catalysed reaction is 4-(phosphooxy)-L-threonine + 2-oxoglutarate = (R)-3-hydroxy-2-oxo-4-phosphooxybutanoate + L-glutamate. It functions in the pathway amino-acid biosynthesis; L-serine biosynthesis; L-serine from 3-phospho-D-glycerate: step 2/3. The protein operates within cofactor biosynthesis; pyridoxine 5'-phosphate biosynthesis; pyridoxine 5'-phosphate from D-erythrose 4-phosphate: step 3/5. Catalyzes the reversible conversion of 3-phosphohydroxypyruvate to phosphoserine and of 3-hydroxy-2-oxo-4-phosphonooxybutanoate to phosphohydroxythreonine. The protein is Phosphoserine aminotransferase of Pseudoalteromonas translucida (strain TAC 125).